The chain runs to 351 residues: Dihydroorotate dehydrogenase (quinone) (351 aa).

FMN-binding positions include 61 to 65 (AGLDK) and Thr85. Lys65 is a substrate binding site. 110 to 114 (NRMGF) is a substrate binding site. Residues Asn139 and Asn172 each coordinate FMN. Asn172 serves as a coordination point for substrate. Ser175 serves as the catalytic Nucleophile. Residue Asn177 coordinates substrate. Residues Lys217 and Thr245 each contribute to the FMN site. 246-247 (NT) is a binding site for substrate. Residues Gly268, Gly297, and 318-319 (YS) contribute to the FMN site.

Belongs to the dihydroorotate dehydrogenase family. Type 2 subfamily. Monomer. Requires FMN as cofactor.

The protein resides in the cell membrane. It carries out the reaction (S)-dihydroorotate + a quinone = orotate + a quinol. It functions in the pathway pyrimidine metabolism; UMP biosynthesis via de novo pathway; orotate from (S)-dihydroorotate (quinone route): step 1/1. Catalyzes the conversion of dihydroorotate to orotate with quinone as electron acceptor. The sequence is that of Dihydroorotate dehydrogenase (quinone) from Stenotrophomonas maltophilia (strain K279a).